We begin with the raw amino-acid sequence, 303 residues long: N-acetylmuramic acid 6-phosphate etherase (303 aa).

Positions 1-21 (MQPSQLRSLTTESRNPNTMGI) are disordered. One can recognise an SIS domain in the interval 58–221 (AYDSISNGGR…STSVMIRQGK (164 aa)). E86 acts as the Proton donor in catalysis. Residue E117 is part of the active site.

The protein belongs to the GCKR-like family. MurNAc-6-P etherase subfamily. In terms of assembly, homodimer.

The enzyme catalyses N-acetyl-D-muramate 6-phosphate + H2O = N-acetyl-D-glucosamine 6-phosphate + (R)-lactate. It functions in the pathway amino-sugar metabolism; N-acetylmuramate degradation. In terms of biological role, specifically catalyzes the cleavage of the D-lactyl ether substituent of MurNAc 6-phosphate, producing GlcNAc 6-phosphate and D-lactate. The protein is N-acetylmuramic acid 6-phosphate etherase of Bacillus pumilus (strain SAFR-032).